The sequence spans 361 residues: KDEL-tailed cysteine endopeptidase CEP2 (361 aa).

The signal sequence occupies residues methionine 1–glycine 20. A propeptide spans phenylalanine 21 to lysine 127 (activation peptide). Asparagine 75 and asparagine 124 each carry an N-linked (GlcNAc...) asparagine glycan. Cystine bridges form between cysteine 149-cysteine 191, cysteine 183-cysteine 224, and cysteine 282-cysteine 333. Cysteine 152 is an active-site residue. Residues histidine 288 and asparagine 308 contribute to the active site. A Prevents secretion from ER motif is present at residues lysine 358 to leucine 361.

Belongs to the peptidase C1 family. As to expression, expressed in roots, stems, rosette and cauline leaves, flowers, buds and green siliques. Found in the tip of young primary leaves, in very young root tips and at later stages in all tissues of lateral root, including the vascular bundle. Not expressed in lateral root primordia, while directly emerging through the epidermis.

It localises to the endoplasmic reticulum. Involved in the final stage of developmental programmed cell death and in intercalation of new cells. Cleaves extensins, thus probably supporting the final cell collapse. This chain is KDEL-tailed cysteine endopeptidase CEP2, found in Arabidopsis thaliana (Mouse-ear cress).